The chain runs to 97 residues: Large ribosomal subunit protein eL21 (97 aa).

The interval 1-26 (MQKSEGFRSKTRYKLQKHPRQKGMAP) is disordered. Residues 9 to 21 (SKTRYKLQKHPRQ) are compositionally biased toward basic residues.

It belongs to the eukaryotic ribosomal protein eL21 family.

The chain is Large ribosomal subunit protein eL21 from Methanococcus maripaludis (strain C6 / ATCC BAA-1332).